The sequence spans 227 residues: Ion-translocating oxidoreductase complex subunit E (227 aa).

5 consecutive transmembrane segments (helical) span residues 57 to 77 (LGLG…ISLF), 89 to 109 (IYVM…NAFA), 111 to 131 (PVYQ…IVIG), 146 to 166 (AFDG…LGAI), and 200 to 220 (GLLL…ILAV).

It belongs to the NqrDE/RnfAE family. As to quaternary structure, the complex is composed of six subunits: RnfA, RnfB, RnfC, RnfD, RnfE and RnfG.

It localises to the cell inner membrane. In terms of biological role, part of a membrane-bound complex that couples electron transfer with translocation of ions across the membrane. In Haemophilus ducreyi (strain 35000HP / ATCC 700724), this protein is Ion-translocating oxidoreductase complex subunit E.